A 211-amino-acid chain; its full sequence is Neuroendocrine protein 7B2 (211 aa).

The signal sequence occupies residues 1–26; it reads MVSRMVSTMLSGLLFWLASGWTPAFA. Residues 106–132 are disordered; that stretch reads DFSEDQGYPDPPNPCPVGKTDDGCLEN. The cysteines at positions 120 and 129 are disulfide-linked. Phosphoserine occurs at positions 140 and 204. Residues 173–211 are disordered; it reads GGERRKRRSVNPYLQGQRLDNVVAKKSVPHFSDEDKDPE.

The protein belongs to the 7B2 family. In terms of assembly, interacts with PCSK2/PC2 early in the secretory pathway. Dissociation occurs at later stages. Proteolytically cleaved in the Golgi by a furin-like convertase to generate bioactive peptides. Post-translationally, sulfated on tyrosine residues.

The protein resides in the secreted. Its function is as follows. Acts as a molecular chaperone for PCSK2/PC2, preventing its premature activation in the regulated secretory pathway. Binds to inactive PCSK2 in the endoplasmic reticulum and facilitates its transport from there to later compartments of the secretory pathway where it is proteolytically matured and activated. Also required for cleavage of PCSK2 but does not appear to be involved in its folding. Plays a role in regulating pituitary hormone secretion. The C-terminal peptide inhibits PCSK2 in vitro. The polypeptide is Neuroendocrine protein 7B2 (SCG5) (Pan troglodytes (Chimpanzee)).